The chain runs to 539 residues: Phosphoenolpyruvate carboxykinase (ATP) (539 aa).

Substrate is bound by residues Arg-61, Tyr-195, and Lys-201. Residues Lys-201, His-220, and 238–246 contribute to the ATP site; that span reads GLSGTGKTT. Mn(2+) is bound by residues Lys-201 and His-220. Mn(2+) is bound at residue Asp-259. ATP is bound by residues Glu-287, Arg-325, and Thr-450. Arg-325 lines the substrate pocket.

The protein belongs to the phosphoenolpyruvate carboxykinase (ATP) family. It depends on Mn(2+) as a cofactor.

It localises to the cytoplasm. The catalysed reaction is oxaloacetate + ATP = phosphoenolpyruvate + ADP + CO2. The protein operates within carbohydrate biosynthesis; gluconeogenesis. Functionally, involved in the gluconeogenesis. Catalyzes the conversion of oxaloacetate (OAA) to phosphoenolpyruvate (PEP) through direct phosphoryl transfer between the nucleoside triphosphate and OAA. This Methylorubrum populi (strain ATCC BAA-705 / NCIMB 13946 / BJ001) (Methylobacterium populi) protein is Phosphoenolpyruvate carboxykinase (ATP).